The sequence spans 143 residues: Nucleoside diphosphate kinase (143 aa).

ATP-binding residues include lysine 11, phenylalanine 59, arginine 87, threonine 93, arginine 104, and asparagine 114. Histidine 117 (pros-phosphohistidine intermediate) is an active-site residue.

The protein belongs to the NDK family. As to quaternary structure, homotetramer. It depends on Mg(2+) as a cofactor.

The protein resides in the cytoplasm. It catalyses the reaction a 2'-deoxyribonucleoside 5'-diphosphate + ATP = a 2'-deoxyribonucleoside 5'-triphosphate + ADP. The catalysed reaction is a ribonucleoside 5'-diphosphate + ATP = a ribonucleoside 5'-triphosphate + ADP. Its function is as follows. Major role in the synthesis of nucleoside triphosphates other than ATP. The ATP gamma phosphate is transferred to the NDP beta phosphate via a ping-pong mechanism, using a phosphorylated active-site intermediate. This chain is Nucleoside diphosphate kinase, found in Erwinia tasmaniensis (strain DSM 17950 / CFBP 7177 / CIP 109463 / NCPPB 4357 / Et1/99).